Reading from the N-terminus, the 89-residue chain is Small ribosomal subunit protein uS14A (89 aa).

The tract at residues 34–54 (ESLRKLPRDSNPNRLKNRDKI) is disordered.

Belongs to the universal ribosomal protein uS14 family. In terms of assembly, part of the 30S ribosomal subunit. Contacts proteins S3 and S10.

Binds 16S rRNA, required for the assembly of 30S particles and may also be responsible for determining the conformation of the 16S rRNA at the A site. The polypeptide is Small ribosomal subunit protein uS14A (Streptococcus pyogenes serotype M1).